A 438-amino-acid chain; its full sequence is L-cysteine:1D-myo-inositol 2-amino-2-deoxy-alpha-D-glucopyranoside ligase (438 aa).

The segment at 1–27 (MKSWSSRPVPELPGTGTAPRVHDTSTG) is disordered. Residue C44 participates in Zn(2+) binding. Residues 44–47 (CGIT), T59, and 82–84 (NVT) each bind L-cysteinyl-5'-AMP. Positions 46-56 (ITPYDATHMGH) match the 'HIGH' region motif. The short motif at 208 to 213 (DHGGDP) is the 'ERGGDP' region element. W249 is an L-cysteinyl-5'-AMP binding site. C253 contacts Zn(2+). 271–273 (GSD) contacts L-cysteinyl-5'-AMP. Residue H278 participates in Zn(2+) binding. Residue V304 coordinates L-cysteinyl-5'-AMP. The 'KMSKS' region signature appears at 310–314 (KMSKS).

This sequence belongs to the class-I aminoacyl-tRNA synthetase family. MshC subfamily. As to quaternary structure, monomer. Requires Zn(2+) as cofactor.

The catalysed reaction is 1D-myo-inositol 2-amino-2-deoxy-alpha-D-glucopyranoside + L-cysteine + ATP = 1D-myo-inositol 2-(L-cysteinylamino)-2-deoxy-alpha-D-glucopyranoside + AMP + diphosphate + H(+). In terms of biological role, catalyzes the ATP-dependent condensation of GlcN-Ins and L-cysteine to form L-Cys-GlcN-Ins. This is L-cysteine:1D-myo-inositol 2-amino-2-deoxy-alpha-D-glucopyranoside ligase from Kocuria rhizophila (strain ATCC 9341 / DSM 348 / NBRC 103217 / DC2201).